Here is a 65-residue protein sequence, read N- to C-terminus: uncharacterized protein (65 aa).

It localises to the plastid. The protein localises to the chloroplast. This is an uncharacterized protein from Porphyra purpurea (Red seaweed).